Reading from the N-terminus, the 141-residue chain is VLSEGNKKAIKNLLQKIHSQTEVLGAEALARLFECHPQTKSYFPKFSGFSANDKRVKHHGALVLKALVDTNKHLDDLPHHLNKLAEKHGKGLLVDPHNFKLFSDCIAVTLAAHLQEFSPETHCAVDKFLEEVTYQLSSLYR.

A Globin domain is found at 1 to 141 (VLSEGNKKAI…VTYQLSSLYR (141 aa)). H59 provides a ligand contact to O2. H88 lines the heme b pocket.

Belongs to the globin family. As to quaternary structure, heterotetramer of two alpha chains and two beta chains. As to expression, red blood cells.

Involved in oxygen transport from the lung to the various peripheral tissues. This chain is Hemoglobin subunit alpha-1, found in Torpedo marmorata (Marbled electric ray).